Consider the following 460-residue polypeptide: MRQEWVAPRRGQANVSQMHYARQGIITEEMTYVAKRENLSPELIRSEIARGRLIIPANINHLNLEPMAIGIASKCKVNANIGASPNSSNINEELEKLHLAVKYGADTVMDLSTGGGNLDEIRTAIINASPVPIGTVPIYQAVESVHGNIEKLTPEDFLHIIEKHAGQGVDYMTIHAGILIEHLPLVKTRLTGIVSRGGGIIAKWMLHHHKQNPLYTHFDEIIEIFKRYDVSFSLGDSLRPGCTHDASDAAQLAELKTLGQLTRRAWEHDVQVMVEGPGHVPMDQIEFNVKKQMEECSEAPFYVLGPLVTDIAPGYDHITSAIGAALAGWYGTAMLCYVTPKEHLGLPNAEDVRNGLIAYKIAAHAADIARHRPGARDRDDELSIARYNFDWNRQFQLSLDPDRAKEYHDETLPADIYKTAEFCSMCGPKFCPMQTKVDADAITELEKFLASQNQDNLTPV.

Substrate contacts are provided by residues asparagine 80, methionine 109, tyrosine 139, histidine 175, 195-197, 236-239, and glutamate 275; these read SRG and DSLR. A Zn(2+)-binding site is contributed by histidine 279. A substrate-binding site is contributed by tyrosine 302. A Zn(2+)-binding site is contributed by histidine 343. [4Fe-4S] cluster-binding residues include cysteine 423, cysteine 426, and cysteine 431.

This sequence belongs to the ThiC family. It depends on [4Fe-4S] cluster as a cofactor.

It carries out the reaction 5-amino-1-(5-phospho-beta-D-ribosyl)imidazole + S-adenosyl-L-methionine = 4-amino-2-methyl-5-(phosphooxymethyl)pyrimidine + CO + 5'-deoxyadenosine + formate + L-methionine + 3 H(+). Its pathway is cofactor biosynthesis; thiamine diphosphate biosynthesis. Catalyzes the synthesis of the hydroxymethylpyrimidine phosphate (HMP-P) moiety of thiamine from aminoimidazole ribotide (AIR) in a radical S-adenosyl-L-methionine (SAM)-dependent reaction. The polypeptide is Phosphomethylpyrimidine synthase (Microcystis aeruginosa (strain NIES-843 / IAM M-2473)).